The chain runs to 306 residues: 4-hydroxy-tetrahydrodipicolinate synthase (306 aa).

Threonine 49 serves as a coordination point for pyruvate. Tyrosine 136 (proton donor/acceptor) is an active-site residue. The active-site Schiff-base intermediate with substrate is lysine 164. A pyruvate-binding site is contributed by isoleucine 207.

It belongs to the DapA family. In terms of assembly, homotetramer; dimer of dimers.

The protein resides in the cytoplasm. It carries out the reaction L-aspartate 4-semialdehyde + pyruvate = (2S,4S)-4-hydroxy-2,3,4,5-tetrahydrodipicolinate + H2O + H(+). It participates in amino-acid biosynthesis; L-lysine biosynthesis via DAP pathway; (S)-tetrahydrodipicolinate from L-aspartate: step 3/4. Its function is as follows. Catalyzes the condensation of (S)-aspartate-beta-semialdehyde [(S)-ASA] and pyruvate to 4-hydroxy-tetrahydrodipicolinate (HTPA). The polypeptide is 4-hydroxy-tetrahydrodipicolinate synthase (Haloarcula marismortui (strain ATCC 43049 / DSM 3752 / JCM 8966 / VKM B-1809) (Halobacterium marismortui)).